The sequence spans 586 residues: Arginine--tRNA ligase (586 aa).

Positions 131-141 (ANPTGPMHVGH) match the 'HIGH' region motif.

Belongs to the class-I aminoacyl-tRNA synthetase family. As to quaternary structure, monomer.

It is found in the cytoplasm. The catalysed reaction is tRNA(Arg) + L-arginine + ATP = L-arginyl-tRNA(Arg) + AMP + diphosphate. The chain is Arginine--tRNA ligase from Azorhizobium caulinodans (strain ATCC 43989 / DSM 5975 / JCM 20966 / LMG 6465 / NBRC 14845 / NCIMB 13405 / ORS 571).